The chain runs to 363 residues: Probable mannitol dehydrogenase 3 (363 aa).

Cys51, His73, Cys104, Cys107, Cys110, Cys118, and Cys168 together coordinate Zn(2+).

Belongs to the zinc-containing alcohol dehydrogenase family. Requires Zn(2+) as cofactor.

It catalyses the reaction D-mannitol + NAD(+) = D-mannose + NADH + H(+). Its function is as follows. Oxidizes mannitol to mannose. Provides the initial step by which translocated mannitol is committed to central metabolism and, by regulating mannitol pool size, is important in regulating salt tolerance at the cellular level. The chain is Probable mannitol dehydrogenase 3 (CAD3) from Stylosanthes humilis (Townsville stylo).